The sequence spans 174 residues: Bacterial proteasome activator (174 aa).

Disordered regions lie at residues 1 to 37 (MNNDNDDSIEIIGGVDPRTMATRGEDESRDSDEPSLT) and 153 to 174 (SALPPGMGKPGQAGGQGTGQYL). The span at 160-174 (GKPGQAGGQGTGQYL) shows a compositional bias: gly residues. The short motif at 172-174 (QYL) is the HbYX motif element.

The protein belongs to the Bpa family. As to quaternary structure, forms a homooligomeric, either hexameric or heptameric, ring-like structure which stacks co-axially with the proteasomal alpha-rings.

Functionally, interacts with the core proteasome alpha-subunit (PrcA) through its C-terminal hydrophobic-tyrosine-X motif (HbYX motif). Interaction of Bpa with the proteasome stimulates proteasomal peptidase and casein degradation activity, which suggests Bpa could play a role in the removal of non-native or damaged proteins by influencing the conformation of the proteasome complex upon interaction. This Mycobacterium leprae (strain TN) protein is Bacterial proteasome activator (bpa).